A 460-amino-acid polypeptide reads, in one-letter code: Lipase member H-A (460 aa).

The N-terminal stretch at 1–26 is a signal peptide; that stretch reads MLLSFYFNGLLLVGCLLSWGRSDTEG. N-linked (GlcNAc...) asparagine glycosylation is found at Asn-67 and Asn-75. Residue Ser-163 is the Nucleophile of the active site. N-linked (GlcNAc...) asparagine glycosylation occurs at Asn-177. Asp-187 (charge relay system) is an active-site residue. A disulfide bridge connects residues Cys-242 and Cys-255. His-257 (charge relay system) is an active-site residue. 2 disulfides stabilise this stretch: Cys-279-Cys-290 and Cys-293-Cys-301. Residue Asn-289 is glycosylated (N-linked (GlcNAc...) asparagine). N-linked (GlcNAc...) asparagine glycosylation occurs at Asn-366. A disulfide bridge connects residues Cys-436 and Cys-455.

It belongs to the AB hydrolase superfamily. Lipase family.

Its subcellular location is the secreted. The protein resides in the cell membrane. The catalysed reaction is 1-hexadecanoyl-2-(9Z-octadecenoyl)-sn-glycero-3-phosphate + H2O = 2-(9Z-octadecenoyl)-sn-glycero-3-phosphate + hexadecanoate + H(+). Functionally, hydrolyzes specifically phosphatidic acid (PA) to produce 2-acyl lysophosphatidic acid (LPA; a potent bioactive lipid mediator) and fatty acid. Does not hydrolyze other phospholipids, like phosphatidylserine (PS), phosphatidylcholine (PC) and phosphatidylethanolamine (PE) or triacylglycerol (TG). The chain is Lipase member H-A (liph-a) from Xenopus laevis (African clawed frog).